The following is a 507-amino-acid chain: tRNA(Ile)-lysidine synthase (507 aa).

Residue 24-29 participates in ATP binding; that stretch reads SGGGDS. The CMP/dCMP-type deaminase domain maps to 370–500; it reads PPEEAHMAEA…KLLRDFFARL (131 aa). Residues His-420, Cys-445, and Cys-448 each contribute to the Zn(2+) site.

It belongs to the tRNA(Ile)-lysidine synthase family.

The protein localises to the cytoplasm. The enzyme catalyses cytidine(34) in tRNA(Ile2) + L-lysine + ATP = lysidine(34) in tRNA(Ile2) + AMP + diphosphate + H(+). In terms of biological role, ligates lysine onto the cytidine present at position 34 of the AUA codon-specific tRNA(Ile) that contains the anticodon CAU, in an ATP-dependent manner. Cytidine is converted to lysidine, thus changing the amino acid specificity of the tRNA from methionine to isoleucine. The polypeptide is tRNA(Ile)-lysidine synthase (tilS) (Thermus thermophilus (strain ATCC BAA-163 / DSM 7039 / HB27)).